The chain runs to 189 residues: Interferon alpha-17 (189 aa).

The N-terminal stretch at 1 to 23 is a signal peptide; it reads MALSFSLLMAVLVLSYKSICSLG. Cystine bridges form between Cys-24-Cys-122 and Cys-52-Cys-162.

It belongs to the alpha/beta interferon family.

It localises to the secreted. Its function is as follows. Produced by macrophages, IFN-alpha have antiviral activities. Interferon stimulates the production of two enzymes: a protein kinase and an oligoadenylate synthetase. The sequence is that of Interferon alpha-17 (IFNA17) from Homo sapiens (Human).